The chain runs to 365 residues: Class I histocompatibility antigen, B alpha chain (365 aa).

The N-terminal stretch at 1-24 (MTVMAPRTLLLLLSGALVLTETWA) is a signal peptide. Positions 25-114 (GSHSMRYFST…ALGYYNQSEA (90 aa)) are alpha-1. Residues 25–308 (GSHSMRYFST…EPPSQPTIPI (284 aa)) lie on the Extracellular side of the membrane. N-linked (GlcNAc...) asparagine glycosylation is present at asparagine 110. Residues 115 to 206 (GSHTIQMMSG…ENGKETLQRA (92 aa)) form an alpha-2 region. 2 disulfides stabilise this stretch: cysteine 125–cysteine 188 and cysteine 227–cysteine 283. The alpha-3 stretch occupies residues 207–298 (EPPKTHVTHH…GLPEPLTLRW (92 aa)). Residues 209–297 (PKTHVTHHPV…EGLPEPLTLR (89 aa)) enclose the Ig-like C1-type domain. Residues 299-308 (EPPSQPTIPI) form a connecting peptide region. Residues 309–332 (MGIVAILAILGAVVTGAVVTAVMW) traverse the membrane as a helical segment. Topologically, residues 333-365 (RKKSSDKKGGSYSQAARSDSAQGSDVSLTACKV) are cytoplasmic. The disordered stretch occupies residues 337 to 361 (SDKKGGSYSQAARSDSAQGSDVSLT). Over residues 346–359 (QAARSDSAQGSDVS) the composition is skewed to polar residues. 2 positions are modified to phosphoserine: serine 356 and serine 359.

It belongs to the MHC class I family. In terms of assembly, heterodimer of an alpha chain and a beta chain (beta-2-microglobulin).

It is found in the membrane. Involved in the presentation of foreign antigens to the immune system. The sequence is that of Class I histocompatibility antigen, B alpha chain from Saguinus oedipus (Cotton-top tamarin).